An 868-amino-acid chain; its full sequence is Muscle, skeletal receptor tyrosine protein kinase (868 aa).

A signal peptide spans M1–T21. The Extracellular segment spans residues E22–T494. Ig-like domains lie at P28–Q116, P121–K205, and A212–S302. 3 cysteine pairs are disulfide-bonded: C49/C99, C98/C112, and C142/C190. N222 carries an N-linked (GlcNAc...) asparagine glycan. 6 disulfide bridges follow: C233–C282, C317–C382, C325–C375, C366–C406, C394–C447, and C398–C434. Residues E312 to L450 enclose the FZ domain. The N-linked (GlcNAc...) asparagine glycan is linked to N338. The N-linked (GlcNAc...) asparagine glycan is linked to N459. A helical membrane pass occupies residues V495–Y515. The Cytoplasmic segment spans residues C516–V868. At Y553 the chain carries Phosphotyrosine; by autocatalysis. The region spanning I574 to L855 is the Protein kinase domain. ATP is bound by residues I580–V588 and K608. Phosphoserine; by CK2 occurs at positions 680 and 697. The active-site Proton acceptor is the D724. Y754 carries the phosphotyrosine; by autocatalysis modification.

The protein belongs to the protein kinase superfamily. Tyr protein kinase family. In terms of assembly, monomer. Homodimer. Interacts with LRP4; the heterodimer forms an AGRIN receptor complex that binds AGRIN resulting in activation of MUSK. Forms a heterotetramer composed of 2 DOK7 and 2 MUSK molecules which facilitates MUSK trans-autophosphorylation on tyrosine residue and activation. Interacts (via cytoplasmic part) with DOK7 (via IRS-type PTB domain); requires MUSK phosphorylation. Interacts with DVL1 (via DEP domain); the interaction is direct and mediates the formation of a DVL1, MUSK and PAK1 ternary complex involved in AChR clustering. Interacts with PDZRN3; this interaction is enhanced by agrin. Interacts with FNTA; the interaction is direct and mediates AGRIN-induced phosphorylation and activation of FNTA. Interacts with CSNK2B; mediates regulation by CK2. Interacts (via the cytoplasmic domain) with DNAJA3. Interacts with NSF; may regulate MUSK endocytosis and activity. Interacts with CAV3; may regulate MUSK signaling. Interacts with RNF31. Interacts with DOK7. It depends on Mg(2+) as a cofactor. In terms of processing, ubiquitinated by PDZRN3. Ubiquitination promotes endocytosis and lysosomal degradation. Post-translationally, phosphorylated. Phosphorylation is induced by AGRIN in a LRP4-dependent manner. Autophosphorylated. Autophosphorylation at Tyr-553 is required for interaction with DOK7 which in turn stimulates the phosphorylation and the activation of MUSK. Neddylated. Muscle specific.

It localises to the postsynaptic cell membrane. The enzyme catalyses L-tyrosyl-[protein] + ATP = O-phospho-L-tyrosyl-[protein] + ADP + H(+). Its activity is regulated as follows. Positively regulated by CK2. Its function is as follows. Receptor tyrosine kinase which plays a central role in the formation and the maintenance of the neuromuscular junction (NMJ), the synapse between the motor neuron and the skeletal muscle. Recruitment of AGRIN by LRP4 to the MUSK signaling complex induces phosphorylation and activation of MUSK, the kinase of the complex. The activation of MUSK in myotubes regulates the formation of NMJs through the regulation of different processes including the specific expression of genes in subsynaptic nuclei, the reorganization of the actin cytoskeleton and the clustering of the acetylcholine receptors (AChR) in the postsynaptic membrane. May regulate AChR phosphorylation and clustering through activation of ABL1 and Src family kinases which in turn regulate MUSK. DVL1 and PAK1 that form a ternary complex with MUSK are also important for MUSK-dependent regulation of AChR clustering. May positively regulate Rho family GTPases through FNTA. Mediates the phosphorylation of FNTA which promotes prenylation, recruitment to membranes and activation of RAC1 a regulator of the actin cytoskeleton and of gene expression. Other effectors of the MUSK signaling include DNAJA3 which functions downstream of MUSK. May also play a role within the central nervous system by mediating cholinergic responses, synaptic plasticity and memory formation. This Rattus norvegicus (Rat) protein is Muscle, skeletal receptor tyrosine protein kinase (Musk).